The primary structure comprises 298 residues: 4-hydroxy-tetrahydrodipicolinate synthase (298 aa).

A pyruvate-binding site is contributed by threonine 51. The active-site Proton donor/acceptor is tyrosine 139. Lysine 167 acts as the Schiff-base intermediate with substrate in catalysis. Isoleucine 209 provides a ligand contact to pyruvate.

This sequence belongs to the DapA family. As to quaternary structure, homotetramer; dimer of dimers.

Its subcellular location is the cytoplasm. It catalyses the reaction L-aspartate 4-semialdehyde + pyruvate = (2S,4S)-4-hydroxy-2,3,4,5-tetrahydrodipicolinate + H2O + H(+). Its pathway is amino-acid biosynthesis; L-lysine biosynthesis via DAP pathway; (S)-tetrahydrodipicolinate from L-aspartate: step 3/4. Its function is as follows. Catalyzes the condensation of (S)-aspartate-beta-semialdehyde [(S)-ASA] and pyruvate to 4-hydroxy-tetrahydrodipicolinate (HTPA). The chain is 4-hydroxy-tetrahydrodipicolinate synthase from Histophilus somni (strain 2336) (Haemophilus somnus).